The following is a 107-amino-acid chain: Class I hydrophobin hgfI (107 aa).

An N-terminal signal peptide occupies residues 1 to 24 (MFSKLAIFATAAFAVLAAATPVRR). Disulfide bonds link Cys27-Cys88, Cys34-Cys82, Cys35-Cys68, and Cys89-Cys102.

It belongs to the fungal hydrophobin family. As to quaternary structure, self-assembles to form functional amyloid fibrils called rodlets with a length range 100-150 nm. Self-assembly into fibrillar rodlets occurs spontaneously at hydrophobic:hydrophilic interfaces and the rodlets further associate laterally to form amphipathic monolayers. Only weekly expressed in hyphae cultured in liquid medium.

It is found in the secreted. The protein localises to the cell wall. Functionally, aerial growth, conidiation, and dispersal of filamentous fungi in the environment rely upon a capability of their secreting small amphipathic proteins called hydrophobins (HPBs) with low sequence identity. Class I can self-assemble into an outermost layer of rodlet bundles on aerial cell surfaces, conferring cellular hydrophobicity that supports fungal growth, development and dispersal; whereas Class II form highly ordered films at water-air interfaces through intermolecular interactions but contribute nothing to the rodlet structure. HgfI is a class I hydrophobin that is involved in cell surface hydrophobicity and lowers the surface tension of water and change the nature of the surfaces to which it adsorbs. The chain is Class I hydrophobin hgfI from Grifola frondosa (Maitake).